Reading from the N-terminus, the 163-residue chain is UPF0262 protein RPA4530 (163 aa).

It belongs to the UPF0262 family.

The chain is UPF0262 protein RPA4530 from Rhodopseudomonas palustris (strain ATCC BAA-98 / CGA009).